A 237-amino-acid polypeptide reads, in one-letter code: ATP synthase subunit a (237 aa).

A run of 4 helical transmembrane segments spans residues 17-37 (LSDM…AVAA), 78-98 (LGVT…PFWL), 178-198 (ILLG…CGSI), and 201-221 (MVIM…AFIF).

This sequence belongs to the ATPase A chain family. In terms of assembly, F-type ATPases have 2 components, CF(1) - the catalytic core - and CF(0) - the membrane proton channel. CF(1) has five subunits: alpha(3), beta(3), gamma(1), delta(1), epsilon(1). CF(0) has three main subunits: a(1), b(2) and c(9-12). The alpha and beta chains form an alternating ring which encloses part of the gamma chain. CF(1) is attached to CF(0) by a central stalk formed by the gamma and epsilon chains, while a peripheral stalk is formed by the delta and b chains.

It localises to the cell membrane. Functionally, key component of the proton channel; it plays a direct role in the translocation of protons across the membrane. In Bacillus caldotenax, this protein is ATP synthase subunit a.